We begin with the raw amino-acid sequence, 466 residues long: Argininosuccinate lyase (466 aa).

Belongs to the lyase 1 family. Argininosuccinate lyase subfamily.

It is found in the cytoplasm. It catalyses the reaction 2-(N(omega)-L-arginino)succinate = fumarate + L-arginine. The protein operates within amino-acid biosynthesis; L-arginine biosynthesis; L-arginine from L-ornithine and carbamoyl phosphate: step 3/3. This chain is Argininosuccinate lyase, found in Brucella canis (strain ATCC 23365 / NCTC 10854 / RM-666).